The primary structure comprises 690 residues: Copper-exporting P-type ATPase B (690 aa).

The Cytoplasmic portion of the chain corresponds to 1–64 (MHEHDSHGEA…MEDFKKRFYV (64 aa)). The tract at residues 23–46 (QHHEHHGHEEEHSAHHEKMKHSAD) is disordered. Positions 28-46 (HGHEEEHSAHHEKMKHSAD) are enriched in basic and acidic residues. A helical membrane pass occupies residues 65 to 85 (STLLTIPILILSPAIQTFLGF). Topologically, residues 86–91 (RVEFAG) are extracellular. A helical transmembrane segment spans residues 92–112 (SLYILFLLSSAVYFYGGYPFL). At 113–127 (KGIFDELRRRQPGMM) the chain is on the cytoplasmic side. A helical membrane pass occupies residues 128 to 148 (TLIAVAISVAYFYSSAVVFGL). The Extracellular segment spans residues 149–151 (KGK). The chain crosses the membrane as a helical span at residues 152–172 (FFFWELATLIDIMLLGHYIEM). Residues 173 to 303 (RSVLGASRAL…KSRTQDLANR (131 aa)) lie on the Cytoplasmic side of the membrane. A helical transmembrane segment spans residues 304–324 (AALLLTVIALTVGSVTLAIWL). The Extracellular portion of the chain corresponds to 325–336 (AYIADFAFAIER). Residues 337-357 (AVTVMVITCPHALGLAIPLVV) form a helical membrane-spanning segment. The Cytoplasmic segment spans residues 358 to 640 (AVSTSLAAKS…RKTYSKMKQN (283 aa)). Aspartate 389 functions as the 4-aspartylphosphate intermediate in the catalytic mechanism. Residues 390 to 391 (KT), 537 to 538 (TG), and lysine 565 each bind phosphate. 2 residues coordinate Mg(2+): aspartate 583 and aspartate 587. A helical membrane pass occupies residues 641 to 661 (LLWATGYNAFAIPLAAGVLYS). The Extracellular portion of the chain corresponds to 662–663 (AG). Residues 664–684 (ILLSPAVGAILMSLSTVIVAI) form a helical membrane-spanning segment. Over 685–690 (NARLLR) the chain is Cytoplasmic.

The protein belongs to the cation transport ATPase (P-type) (TC 3.A.3) family. Type IB subfamily.

The protein localises to the cell membrane. It carries out the reaction Cu(2+)(in) + ATP + H2O = Cu(2+)(out) + ADP + phosphate + H(+). With respect to regulation, activated by Cu(2+) and to a lesser extent by Ag(+) and Cu(+). Functionally, involved in copper export. This is Copper-exporting P-type ATPase B (copB) from Archaeoglobus fulgidus (strain ATCC 49558 / DSM 4304 / JCM 9628 / NBRC 100126 / VC-16).